Here is a 385-residue protein sequence, read N- to C-terminus: Flap endonuclease 1 (385 aa).

Positions 1–105 (MGIKGLNAII…HELSKRSARR (105 aa)) are N-domain. Asp34 serves as a coordination point for Mg(2+). DNA contacts are provided by Arg47 and Arg71. The Mg(2+) site is built by Asp87, Glu156, Glu158, Asp177, and Asp179. An I-domain region spans residues 120 to 251 (EKLKHERRLV…VTALKLIKEH (132 aa)). Glu156 provides a ligand contact to DNA. Residues Gly229 and Asp231 each contribute to the DNA site. Residue Asp231 participates in Mg(2+) binding. The interaction with PCNA stretch occupies residues 338–346 (VQGRLDGFF). Low complexity predominate over residues 356–370 (LAAANAKAKSTKAGK). The segment at 356–385 (LAAANAKAKSTKAGKQATKGKVGKPGRPRK) is disordered. Residues 376 to 385 (KVGKPGRPRK) are compositionally biased toward basic residues.

This sequence belongs to the XPG/RAD2 endonuclease family. FEN1 subfamily. In terms of assembly, interacts with PCNA. Three molecules of FEN1 bind to one PCNA trimer with each molecule binding to one PCNA monomer. PCNA stimulates the nuclease activity without altering cleavage specificity. Mg(2+) is required as a cofactor. In terms of processing, phosphorylated. Phosphorylation upon DNA damage induces relocalization to the nuclear plasma.

It localises to the nucleus. It is found in the nucleolus. The protein resides in the nucleoplasm. The protein localises to the mitochondrion. Its function is as follows. Structure-specific nuclease with 5'-flap endonuclease and 5'-3' exonuclease activities involved in DNA replication and repair. During DNA replication, cleaves the 5'-overhanging flap structure that is generated by displacement synthesis when DNA polymerase encounters the 5'-end of a downstream Okazaki fragment. It enters the flap from the 5'-end and then tracks to cleave the flap base, leaving a nick for ligation. Also involved in the long patch base excision repair (LP-BER) pathway, by cleaving within the apurinic/apyrimidinic (AP) site-terminated flap. Acts as a genome stabilization factor that prevents flaps from equilibrating into structures that lead to duplications and deletions. Also possesses 5'-3' exonuclease activity on nicked or gapped double-stranded DNA, and exhibits RNase H activity. Also involved in replication and repair of rDNA and in repairing mitochondrial DNA. This is Flap endonuclease 1 from Lachancea thermotolerans (strain ATCC 56472 / CBS 6340 / NRRL Y-8284) (Yeast).